The primary structure comprises 153 residues: Large ribosomal subunit protein bL27m (153 aa).

The transit peptide at M1 to S37 directs the protein to the mitochondrion. Residues I34–G57 are disordered.

It belongs to the bacterial ribosomal protein bL27 family. As to quaternary structure, component of the mitochondrial large ribosomal subunit (mt-LSU). Mature yeast 74S mitochondrial ribosomes consist of a small (37S) and a large (54S) subunit. The 37S small subunit contains a 15S ribosomal RNA (15S mt-rRNA) and at least 32 different proteins. The 54S large subunit contains a 21S rRNA (21S mt-rRNA) and at least 45 different proteins.

Its subcellular location is the mitochondrion. Its function is as follows. Component of the mitochondrial ribosome (mitoribosome), a dedicated translation machinery responsible for the synthesis of mitochondrial genome-encoded proteins, including at least some of the essential transmembrane subunits of the mitochondrial respiratory chain. The mitoribosomes are attached to the mitochondrial inner membrane and translation products are cotranslationally integrated into the membrane. The protein is Large ribosomal subunit protein bL27m (mrp7) of Schizosaccharomyces pombe (strain 972 / ATCC 24843) (Fission yeast).